The sequence spans 191 residues: Elongation factor P (191 aa).

Belongs to the elongation factor P family.

Its subcellular location is the cytoplasm. The protein operates within protein biosynthesis; polypeptide chain elongation. Involved in peptide bond synthesis. Stimulates efficient translation and peptide-bond synthesis on native or reconstituted 70S ribosomes in vitro. Probably functions indirectly by altering the affinity of the ribosome for aminoacyl-tRNA, thus increasing their reactivity as acceptors for peptidyl transferase. In Bartonella tribocorum (strain CIP 105476 / IBS 506), this protein is Elongation factor P.